Here is a 400-residue protein sequence, read N- to C-terminus: Phosphoglycerate kinase (400 aa).

Residues 24–26 (DFN), arginine 40, 63–66 (HFGR), arginine 121, and arginine 154 each bind substrate. ATP contacts are provided by residues lysine 205, glycine 296, glutamate 327, and 356–359 (GGDS).

This sequence belongs to the phosphoglycerate kinase family. As to quaternary structure, monomer.

It localises to the cytoplasm. The enzyme catalyses (2R)-3-phosphoglycerate + ATP = (2R)-3-phospho-glyceroyl phosphate + ADP. The protein operates within carbohydrate degradation; glycolysis; pyruvate from D-glyceraldehyde 3-phosphate: step 2/5. This is Phosphoglycerate kinase from Thermosynechococcus vestitus (strain NIES-2133 / IAM M-273 / BP-1).